Reading from the N-terminus, the 317-residue chain is tRNA dimethylallyltransferase (317 aa).

14–21 (GPTAVGKT) lines the ATP pocket. 16 to 21 (TAVGKT) lines the substrate pocket. Residues 39 to 42 (DSMQ) form an interaction with substrate tRNA region.

It belongs to the IPP transferase family. Monomer. Mg(2+) is required as a cofactor.

The catalysed reaction is adenosine(37) in tRNA + dimethylallyl diphosphate = N(6)-dimethylallyladenosine(37) in tRNA + diphosphate. In terms of biological role, catalyzes the transfer of a dimethylallyl group onto the adenine at position 37 in tRNAs that read codons beginning with uridine, leading to the formation of N6-(dimethylallyl)adenosine (i(6)A). The polypeptide is tRNA dimethylallyltransferase (Bacillus cereus (strain Q1)).